The following is a 208-amino-acid chain: Small ribosomal subunit protein eS8 (208 aa).

The interval methionine 1 to tyrosine 27 is disordered. A lipid anchor (N-myristoyl glycine) is attached at glycine 2. Positions tryptophan 8–lysine 26 are enriched in basic residues. N6-acetyllysine occurs at positions 37 and 128. At threonine 130 the chain carries Phosphothreonine. Serine 160 is subject to Phosphoserine. Glycyl lysine isopeptide (Lys-Gly) (interchain with G-Cter in SUMO2) cross-links involve residues lysine 170 and lysine 193.

The protein belongs to the eukaryotic ribosomal protein eS8 family. As to quaternary structure, component of the small ribosomal subunit. Identified in a IGF2BP1-dependent mRNP granule complex containing untranslated mRNAs. Part of the small subunit (SSU) processome, composed of more than 70 proteins and the RNA chaperone small nucleolar RNA (snoRNA) U3.

It localises to the cytoplasm. Its subcellular location is the membrane. It is found in the nucleus. The protein resides in the nucleolus. Functionally, component of the small ribosomal subunit. The ribosome is a large ribonucleoprotein complex responsible for the synthesis of proteins in the cell. Part of the small subunit (SSU) processome, first precursor of the small eukaryotic ribosomal subunit. During the assembly of the SSU processome in the nucleolus, many ribosome biogenesis factors, an RNA chaperone and ribosomal proteins associate with the nascent pre-rRNA and work in concert to generate RNA folding, modifications, rearrangements and cleavage as well as targeted degradation of pre-ribosomal RNA by the RNA exosome. The chain is Small ribosomal subunit protein eS8 (Rps8) from Mus musculus (Mouse).